Here is a 152-residue protein sequence, read N- to C-terminus: 2-C-methyl-D-erythritol 2,4-cyclodiphosphate synthase (152 aa).

A divalent metal cation is bound by residues Asp8 and His10. Residues 8 to 10 (DSH) and 34 to 35 (HS) each bind 4-CDP-2-C-methyl-D-erythritol 2-phosphate. A divalent metal cation is bound at residue His42. Residues 56–58 (DIG), 61–65 (FPDTD), 100–106 (LDRPKLG), and 131–135 (FKTSE) each bind 4-CDP-2-C-methyl-D-erythritol 2-phosphate.

Belongs to the IspF family. As to quaternary structure, homotrimer. Requires a divalent metal cation as cofactor.

It carries out the reaction 4-CDP-2-C-methyl-D-erythritol 2-phosphate = 2-C-methyl-D-erythritol 2,4-cyclic diphosphate + CMP. It functions in the pathway isoprenoid biosynthesis; isopentenyl diphosphate biosynthesis via DXP pathway; isopentenyl diphosphate from 1-deoxy-D-xylulose 5-phosphate: step 4/6. Functionally, involved in the biosynthesis of isopentenyl diphosphate (IPP) and dimethylallyl diphosphate (DMAPP), two major building blocks of isoprenoid compounds. Catalyzes the conversion of 4-diphosphocytidyl-2-C-methyl-D-erythritol 2-phosphate (CDP-ME2P) to 2-C-methyl-D-erythritol 2,4-cyclodiphosphate (ME-CPP) with a corresponding release of cytidine 5-monophosphate (CMP). The chain is 2-C-methyl-D-erythritol 2,4-cyclodiphosphate synthase from Thermus thermophilus (strain ATCC 27634 / DSM 579 / HB8).